The sequence spans 1321 residues: Indole-3-acetaldehyde oxidase (1321 aa).

The 2Fe-2S ferredoxin-type domain occupies 1 to 90 (MSLVFAINGQ…HCNITTSEGL (90 aa)). The [2Fe-2S] cluster site is built by cysteine 42, cysteine 47, and cysteine 50. In terms of domain architecture, FAD-binding PCMH-type spans 215 to 404 (VDSGMYRWCS…LSIEIPFWHS (190 aa)).

It belongs to the xanthine dehydrogenase family. In terms of assembly, aldehyde oxidases (AO) are homodimers and heterodimers of AO subunits. AO-beta is a AAO1-AAO2 heterodimer; AO-gamma is a AAO2 homodimer. AAO2 also forms a dimer with AAO3. [2Fe-2S] cluster serves as cofactor. It depends on FAD as a cofactor. Mo-molybdopterin is required as a cofactor. As to expression, weakly expressed in roots, leaves and seedlings. In seedlings, mostly expressed in lower part of hypocotyls. Detectable in seeds and mature siliques at low levels.

Its subcellular location is the cytoplasm. The enzyme catalyses indole-3-acetaldehyde + O2 + H2O = (indol-3-yl)acetate + H2O2 + H(+). With respect to regulation, strongly inhibited by iodoacetate, potassium cyanide (KCN), 2-mercaptoethanol, dithiothreitol (DTT), p-chloromercuribenzoate, menadione and estradiol. Weakly inhibited by 4'-(9-acridinylamino)methanesulfon-m-anisidine (mAMSA) and tritonX-100. Not affected by allopurinol. In higher plant aldehyde oxidases (AO) appear to be homo- and heterodimeric assemblies of AO subunits with probably different physiological functions. In vitro, AO-gamma uses heptaldehyde, benzaldehyde, naphthaldehyde and cinnamaldehyde as substrates; AO-beta uses indole-3-acetaldehyde (IAAld), indole-3-aldehyde (IAld) and naphtaldehyde; the AAO2-AAO3 dimer uses abscisic aldehyde. This chain is Indole-3-acetaldehyde oxidase (AAO2), found in Arabidopsis thaliana (Mouse-ear cress).